The chain runs to 170 residues: uncharacterized protein (170 aa).

This is an uncharacterized protein from Myxococcus xanthus.